A 201-amino-acid polypeptide reads, in one-letter code: MFSIRKIITISDYVTMLNIITGLLAILLNSFSLIYLSIIFDSLDGYVARKTGTVSDFGAELDSISDVVSFGVAPAYLLYNNFESNLALISAIIFCLCGALRLARFGILNVKGFIGLPIPAGALLLVGFCQLINSYLINSILAILIGLLMISDIKYPKYPNKIFIYIFAVSLCLAIVGIPHFALMLCLIYAIYGIIKYIRGD.

Transmembrane regions (helical) follow at residues 19–39 (IITG…LSII), 57–77 (FGAE…PAYL), 88–108 (LISA…FGIL), 112–132 (GFIG…CQLI), 133–153 (NSYL…ISDI), and 162–182 (IFIY…PHFA).

It belongs to the CDP-alcohol phosphatidyltransferase class-I family.

The protein localises to the cell membrane. It catalyses the reaction a CDP-1,2-diacyl-sn-glycerol + L-serine = a 1,2-diacyl-sn-glycero-3-phospho-L-serine + CMP + H(+). The chain is CDP-diacylglycerol--serine O-phosphatidyltransferase (pssA) from Methanocaldococcus jannaschii (strain ATCC 43067 / DSM 2661 / JAL-1 / JCM 10045 / NBRC 100440) (Methanococcus jannaschii).